The sequence spans 603 residues: Zyxin (603 aa).

Positions 1 to 13 are enriched in pro residues; sequence MGPPPPPPPPPLL. Disordered stretches follow at residues 1 to 131, 166 to 193, 218 to 237, 310 to 333, and 363 to 395; these read MGPP…HRDP, TQYANKSPSPPSFGNSNSEATYVSPYSS, ATTTTSSNSLNENNNSNKYG, RDEGLTESQKAANRNQTGALSASS, and LNQPADTSPSIVQYPRRQAPDSSRANYSATTST. Positions 69–95 are enriched in basic and acidic residues; sequence VRGDVENLSDGRLDRPHQQLPDGDRTY. Residues 184–193 show a composition bias toward polar residues; that stretch reads EATYVSPYSS. The segment covering 218 to 234 has biased composition (low complexity); sequence ATTTTSSNSLNENNNSN. Polar residues-rich tracts occupy residues 315–333, 363–373, and 382–391; these read TESQKAANRNQTGALSASS, LNQPADTSPSI, and PDSSRANYSA. 3 consecutive LIM zinc-binding domains span residues 409-470, 471-529, and 530-601; these read NICV…SLEK, CTAC…KFAP, and RCAL…RVVS.

The protein belongs to the zyxin/ajuba family. In terms of assembly, interacts with dyc-1. Interacts with glh-1 and glh-3. As to expression, expressed in neurons and body wall muscle. Expressed in pharyngeal, enteric and uterine muscles and in spermatheca.

It localises to the nucleus. Its subcellular location is the cytoplasm. The protein localises to the myofibril. It is found in the sarcomere. The protein resides in the m line. It localises to the cell projection. Its subcellular location is the axon. The protein localises to the cell junction. It is found in the focal adhesion. The protein resides in the cytoskeleton. Functionally, functions both as a mechanical stabilizer (via LIM domains) of focal adhesions, and as a sensor component for muscle cell damage (via N-terminus). Regulates, stabilizes and maintains posterior lateral mechanosensory (PLM) synaptic branch extension and new synapse formation and growth during larval development. This is Zyxin from Caenorhabditis elegans.